The sequence spans 328 residues: MKLFNFKKLSMLIAGFTLVTSPALAEISLRFGYEAPRSDSQHSAAKKFNDLLMKKTKGEIKLKLFPDSTLGNAQTMISSVRGGTIDLEMSGSPNFTGLEPKLNVIDIPFIFKDREHVYKVLDGEVGQNLLKDLEKQGLKGLAFWDVGFRAFSNSKQTVTKPEHIKGLKVRTNQNPMYIEAFKLLGSNPVPMPLAELYTALETRAVDAQEHPIGIFWSSKLYEVQKYLSLTNHGYTPLIVVMNKAKFDSLLPALQTAIIEAAKEAGQFQRDLNVKNEQNIISKLRKQGVEVIEKINTEPFKTLIEEKVRKSFIEKHGDDLLKKVDALSE.

The signal sequence occupies residues 1-25 (MKLFNFKKLSMLIAGFTLVTSPALA).

It belongs to the bacterial solute-binding protein 7 family.

Its subcellular location is the periplasm. This is an uncharacterized protein from Haemophilus influenzae (strain ATCC 51907 / DSM 11121 / KW20 / Rd).